The chain runs to 296 residues: Phosphatidylglycerol--prolipoprotein diacylglyceryl transferase (296 aa).

7 helical membrane passes run 17–37 (LAVR…IVVG), 59–79 (MMFY…VLFY), 97–117 (GGMS…LFAW), 129–149 (FVAP…FING), 203–223 (PSQL…LFFF), 230–250 (LGAV…TVEF), and 265–285 (LSMG…LLVW). Residue R142 coordinates a 1,2-diacyl-sn-glycero-3-phospho-(1'-sn-glycerol).

This sequence belongs to the Lgt family.

The protein localises to the cell inner membrane. It catalyses the reaction L-cysteinyl-[prolipoprotein] + a 1,2-diacyl-sn-glycero-3-phospho-(1'-sn-glycerol) = an S-1,2-diacyl-sn-glyceryl-L-cysteinyl-[prolipoprotein] + sn-glycerol 1-phosphate + H(+). It functions in the pathway protein modification; lipoprotein biosynthesis (diacylglyceryl transfer). Functionally, catalyzes the transfer of the diacylglyceryl group from phosphatidylglycerol to the sulfhydryl group of the N-terminal cysteine of a prolipoprotein, the first step in the formation of mature lipoproteins. The protein is Phosphatidylglycerol--prolipoprotein diacylglyceryl transferase of Burkholderia ambifaria (strain MC40-6).